A 162-amino-acid chain; its full sequence is Transcription elongation factor GreA (162 aa).

Residues 9 to 38 (QGYKALEEELARLKSERPEIIQAIKEAREE) adopt a coiled-coil conformation.

It belongs to the GreA/GreB family.

Functionally, necessary for efficient RNA polymerase transcription elongation past template-encoded arresting sites. The arresting sites in DNA have the property of trapping a certain fraction of elongating RNA polymerases that pass through, resulting in locked ternary complexes. Cleavage of the nascent transcript by cleavage factors such as GreA or GreB allows the resumption of elongation from the new 3'terminus. GreA releases sequences of 2 to 3 nucleotides. The chain is Transcription elongation factor GreA from Desulfovibrio desulfuricans (strain ATCC 27774 / DSM 6949 / MB).